Consider the following 245-residue polypeptide: Probable transcriptional regulatory protein MAG6590 (245 aa).

The protein belongs to the TACO1 family.

Its subcellular location is the cytoplasm. In Mycoplasmopsis agalactiae (strain NCTC 10123 / CIP 59.7 / PG2) (Mycoplasma agalactiae), this protein is Probable transcriptional regulatory protein MAG6590.